The primary structure comprises 218 residues: Ropporin-1-like protein (218 aa).

One can recognise an RIIa domain in the interval 17 to 46 (PELTDILKQFTKAAIRTQPADVLQWSAGYF).

The protein belongs to the ropporin family. Component of the axonemal radial spoke complex 1 (RS1), at least composed of spoke head proteins RSPH1, RSPH3, RSPH9 and the cilia-specific component RSPH4A or sperm-specific component RSPH6A, spoke stalk proteins RSPH14, DNAJB13, DYDC1, ROPN1L and NME5, and the anchor protein IQUB. May interact with AKAP3. Interacts with FSCB; the interaction increases upon spermatozoa capacitation conditions. Interacts with CFAP61. Sumoylated, sumoylation decreases upon spermatozoa capacitation conditions.

Its subcellular location is the cell projection. The protein localises to the cilium. It is found in the flagellum. Functions as part of axonemal radial spoke complexes that play an important part in the motility of sperm and cilia. Important for male fertility. With ROPN1, involved in fibrous sheath integrity and sperm motility, plays a role in PKA-dependent signaling processes required for spermatozoa capacitation. The polypeptide is Ropporin-1-like protein (ROPN1L) (Bos taurus (Bovine)).